The chain runs to 475 residues: uncharacterized protein (475 aa).

A coiled-coil region spans residues glutamate 185–isoleucine 244.

This is an uncharacterized protein from Nora virus.